The following is a 387-amino-acid chain: MNTVVIVDCLRTPMGRSKGGAFRHQRAEDLSAHLMKGILARNPQVNPKEIEDIYWGCVQQTLEQGFNVARNAALLAGLPIEIGAVTVNRLCGSSMQALHDAARAIMVGDAEICLVGGVEHMGHVPMTHGVDFHPGLSKNVAKAAGMMGLTAEMLGKLHGISRQQQDEFAARSHARAHAATLEGRFKNEILPTEGHAADGTLFTLDYDEVIRPETTVAGLAELRPVFDPANGTVTAGTSSALSDGASAMLVMSEQKAKALGLTIRARIKAMAVAGCDPSIMGYGPVPATHKALKRAGLTMQDMDVVELNEAFAAQSLPCAKDLGLLDMMDDKVNLNGGAIALGHPLGCSGTRISTTLINLMEAKDAKYGLATMCIGLGQGIATIFERP.

Residue cysteine 91 is the Acyl-thioester intermediate of the active site. Catalysis depends on proton acceptor residues histidine 343 and cysteine 373.

It belongs to the thiolase-like superfamily. Thiolase family. Heterotetramer of two alpha chains (FadB) and two beta chains (FadA).

Its subcellular location is the cytoplasm. The catalysed reaction is an acyl-CoA + acetyl-CoA = a 3-oxoacyl-CoA + CoA. Its pathway is lipid metabolism; fatty acid beta-oxidation. Functionally, catalyzes the final step of fatty acid oxidation in which acetyl-CoA is released and the CoA ester of a fatty acid two carbons shorter is formed. The sequence is that of 3-ketoacyl-CoA thiolase from Vibrio cholerae serotype O1 (strain ATCC 39541 / Classical Ogawa 395 / O395).